The sequence spans 94 residues: Large ribosomal subunit protein eL14 (94 aa).

The protein belongs to the eukaryotic ribosomal protein eL14 family.

This chain is Large ribosomal subunit protein eL14, found in Methanopyrus kandleri (strain AV19 / DSM 6324 / JCM 9639 / NBRC 100938).